Consider the following 282-residue polypeptide: Ribosomal RNA small subunit methyltransferase I (282 aa).

The protein belongs to the methyltransferase superfamily. RsmI family.

Its subcellular location is the cytoplasm. The catalysed reaction is cytidine(1402) in 16S rRNA + S-adenosyl-L-methionine = 2'-O-methylcytidine(1402) in 16S rRNA + S-adenosyl-L-homocysteine + H(+). Its function is as follows. Catalyzes the 2'-O-methylation of the ribose of cytidine 1402 (C1402) in 16S rRNA. This chain is Ribosomal RNA small subunit methyltransferase I, found in Pseudomonas aeruginosa (strain ATCC 15692 / DSM 22644 / CIP 104116 / JCM 14847 / LMG 12228 / 1C / PRS 101 / PAO1).